The chain runs to 540 residues: Chaperonin GroEL (540 aa).

ATP-binding positions include 30–33, Lys-51, 87–91, Gly-415, and Asp-495; these read TLGP and DGTTT.

The protein belongs to the chaperonin (HSP60) family. As to quaternary structure, forms a cylinder of 14 subunits composed of two heptameric rings stacked back-to-back. Interacts with the co-chaperonin GroES.

It is found in the cytoplasm. The catalysed reaction is ATP + H2O + a folded polypeptide = ADP + phosphate + an unfolded polypeptide.. In terms of biological role, together with its co-chaperonin GroES, plays an essential role in assisting protein folding. The GroEL-GroES system forms a nano-cage that allows encapsulation of the non-native substrate proteins and provides a physical environment optimized to promote and accelerate protein folding. The polypeptide is Chaperonin GroEL (Rhodothermus marinus (Rhodothermus obamensis)).